A 308-amino-acid polypeptide reads, in one-letter code: Isoaspartyl peptidase/L-asparaginase (308 aa).

Position 1 is an N-acetylmethionine (Met-1). The active-site Nucleophile is the Thr-168. Substrate-binding positions include 196–199 and 219–222; these read RVGD and TGHG.

It belongs to the Ntn-hydrolase family. In terms of assembly, heterodimer of an alpha and beta chain produced by autocleavage. This heterodimer may then dimerize in turn, giving rise to a heterotetramer. Cleaved into an alpha and beta chain by autocatalysis; this activates the enzyme. The N-terminal residue of the beta subunit is responsible for the nucleophile hydrolase activity. As to expression, expressed in brain, kidney, testis and tissues of the gastrointestinal tract. Present in sperm (at protein level). Over-expressed in uterine, mammary, prostatic and ovarian carcinoma.

The protein resides in the cytoplasm. It carries out the reaction L-asparagine + H2O = L-aspartate + NH4(+). The enzyme catalyses Cleavage of a beta-linked Asp residue from the N-terminus of a polypeptide.. Its activity is regulated as follows. Glycine accelerates autocleavage into an alpha and beta chain. Has both L-asparaginase and beta-aspartyl peptidase activity. May be involved in the production of L-aspartate, which can act as an excitatory neurotransmitter in some brain regions. Is highly active with L-Asp beta-methyl ester. Besides, has catalytic activity toward beta-aspartyl dipeptides and their methyl esters, including beta-L-Asp-L-Phe, beta-L-Asp-L-Phe methyl ester (aspartame), beta-L-Asp-L-Ala, beta-L-Asp-L-Leu and beta-L-Asp-L-Lys. Does not have aspartylglucosaminidase activity and is inactive toward GlcNAc-L-Asn. Likewise, has no activity toward glutamine. The chain is Isoaspartyl peptidase/L-asparaginase (ASRGL1) from Homo sapiens (Human).